The primary structure comprises 688 residues: Zinc finger CCCH domain-containing protein 22 (688 aa).

Residues 62-123 (ALLPPPPPPS…QPFSRSNGSV (62 aa)) form a disordered region. The span at 101–117 (PLSASSPSSWAQAQPFS) shows a compositional bias: low complexity. The segment at 233-260 (GFGWKPCLYYARGFCKNGSSCRFVHGDD) adopts a C3H1-type zinc-finger fold. In terms of domain architecture, RRM spans 366 to 442 (RQIYLTFPAD…RVLVKPYKEK (77 aa)). Residues 487-522 (TNEMMLRRKLEEQQQAAELQQAIELHSRRLMDLQLL) are a coiled coil. The segment at 552–624 (LATTMVESPP…PTKSSVSAHQ (73 aa)) is disordered. Basic and acidic residues predominate over residues 574–589 (TEERKMVNGGGDKEES). The segment covering 613 to 624 (ASPTKSSVSAHQ) has biased composition (polar residues).

The chain is Zinc finger CCCH domain-containing protein 22 from Oryza sativa subsp. japonica (Rice).